The primary structure comprises 110 residues: UPF0122 protein SaurJH9_1295 (110 aa).

It belongs to the UPF0122 family.

Functionally, might take part in the signal recognition particle (SRP) pathway. This is inferred from the conservation of its genetic proximity to ftsY/ffh. May be a regulatory protein. This is UPF0122 protein SaurJH9_1295 from Staphylococcus aureus (strain JH9).